The chain runs to 829 residues: Sodium/hydrogen exchanger 3 (829 aa).

A signal peptide spans 1-26; sequence MWHRALGPGWKLLLALALTSLQGARG. The Extracellular segment spans residues 27-46; the sequence is AEEEPSSDGSFQVVTFKWHH. Residues 47–69 form a helical membrane-spanning segment; sequence VQDPYIIALWILVASLAKIVFHL. At 70-77 the chain is on the cytoplasmic side; it reads SHKVTSIV. The helical transmembrane segment at 78–97 threads the bilayer; sequence PESALLIVLGLVLGGIVWAA. Residues 98–106 lie on the Extracellular side of the membrane; sequence DHIASFTLT. A helical membrane pass occupies residues 107 to 124; sequence PTLFFFYLLPPIVLDAGY. The Cytoplasmic segment spans residues 125–127; that stretch reads FMP. Residues 128-163 traverse the membrane as a helical segment; it reads NRLFFGNLGTILLYAVIGTIWNAATTGLSLYGVFLS. Residues G133, G136, and T137 each contribute to the a 1,2-diacyl-sn-glycero-3-phospho-(1D-myo-inositol) site. The Extracellular segment spans residues 164–176; the sequence is GLMGELKIGLLDF. A helical membrane pass occupies residues 177 to 198; the sequence is LLFGSLIAAVDPVAVLAVFEEV. The Cytoplasmic segment spans residues 199 to 200; sequence HV. The chain crosses the membrane as a helical span at residues 201 to 232; sequence NEVLFIIVFGESLLNDAVTVVLYNVFESFVTL. Residues 233–239 lie on the Extracellular side of the membrane; the sequence is GGDAVTG. A helical membrane pass occupies residues 240 to 274; that stretch reads VDCVKGIVSFFVVSLGGTLVGVIFAFLLSLVTRFT. The Cytoplasmic segment spans residues 275–276; the sequence is KH. The chain crosses the membrane as a helical span at residues 277 to 299; it reads VRIIEPGFVFVISYLSYLTSEML. Residues 300–301 are Extracellular-facing; the sequence is SL. The chain crosses the membrane as a helical span at residues 302–318; that stretch reads SSILAITFCGICCQKYV. Residues 319–325 are Cytoplasmic-facing; that stretch reads KANISEQ. Residues 326–354 form a helical membrane-spanning segment; it reads SATTVRYTMKMLASGAETIIFMFLGISAV. The Extracellular portion of the chain corresponds to 355–362; the sequence is NPDIWTWN. Residues 363 to 384 traverse the membrane as a helical segment; the sequence is TAFVLLTLVFISVYRAIGVVLQ. The Cytoplasmic segment spans residues 385 to 397; that stretch reads TWILNRYRMVQLE. M393 is an a 1,2-diacyl-sn-glycero-3-phospho-(1D-myo-inositol) binding site. A helical transmembrane segment spans residues 398–421; sequence TIDQVVMSYGGLRGAVAYALVVLL. Residues 422–428 are Extracellular-facing; it reads DEKKVKE. Residues 429 to 462 form a helical membrane-spanning segment; that stretch reads KNLFVSTTLIVVFFTVIFQGLTIKPLVQWLKVKR. Residues 463-829 are Cytoplasmic-facing; that stretch reads SEHREPKLNE…QPAAPESTHM (367 aa). A 1,2-diacyl-sn-glycero-3-phospho-(1D-myo-inositol)-binding residues include Q492, I493, and H495. Phosphoserine occurs at positions 550 and 558. The interaction with EZR stretch occupies residues 571–585; the sequence is RPSTVEASVSYFLRE. Residues 586 to 663 are interaction with NHERF4; sequence NVSAVCLDMQ…RKRLESFKSA (78 aa). The tract at residues 587-691 is interaction with AHCYL1; the sequence is VSAVCLDMQS…AQKRRNSSIP (105 aa). 2 positions are modified to phosphoserine: S588 and S603. At S659 the chain carries Phosphoserine; by SGK1. The span at 677–687 shows a compositional bias: basic residues; that stretch reads YKRERAQKRRN. The segment at 677–696 is disordered; that stretch reads YKRERAQKRRNSSIPNGKLP. A phosphoserine mark is found at S714, S805, and S808.

The protein belongs to the monovalent cation:proton antiporter 1 (CPA1) transporter (TC 2.A.36) family. In terms of assembly, homodimer. Found in the forms of complex and dynamic macromolecular complexes. Binds NHERF1 and NHERF2. Interacts with CHP1; this interaction increases trafficking and activity of SLC9A3 at the plasma membrane. Interacts with CHP2 and SHANK2. Interacts with PDZK1 (via C-terminal PDZ domain). Interacts with NHERF4 and interactions decrease in response to elevated calcium ion levels. Interacts with AHCYL1; the interaction is required for SLC9A3 activity. Interacts with EZR; interaction targets SLC9A3 to the apical membrane. Interacts with SNX27 (via PDZ domains); directs SLC9A3 membrane insertion from early endosomes to the plasma membrane. In terms of processing, phosphorylated by PKA, which inhibits activity. Phosphorylation at Ser-659 by SGK1 is associated with increased abundance at the cell membrane. Phosphorylation at Ser-714 by CSNK2A1 regulates SLC9A3 activity through the formation of multiple signaling complexes.

It localises to the apical cell membrane. The protein resides in the cell membrane. Its subcellular location is the recycling endosome membrane. The protein localises to the early endosome membrane. The enzyme catalyses Na(+)(in) + H(+)(out) = Na(+)(out) + H(+)(in). With respect to regulation, seems to switch between active and inactive modes in response to various stimuli. Activated directly or indirectly by membrane phosphatidylinositol (PIs). Regulated by a variety of auxiliary proteins, which facilitate the maturation, cell surface expression and function of the transporter. Inhibited specifically by the drug tenapanor. Plasma membrane Na(+)/H(+) antiporter. Exchanges intracellular H(+) ions for extracellular Na(+) in 1:1 stoichiometry, playing a key role in salt and fluid absorption and pH homeostasis. Major apical Na(+)/H(+) exchanger in kidney and intestine playing an important role in renal and intestine Na(+) absorption and blood pressure regulation. In Mus musculus (Mouse), this protein is Sodium/hydrogen exchanger 3.